Consider the following 314-residue polypeptide: ATP synthase gamma chain (314 aa).

Belongs to the ATPase gamma chain family. F-type ATPases have 2 components, CF(1) - the catalytic core - and CF(0) - the membrane proton channel. CF(1) has five subunits: alpha(3), beta(3), gamma(1), delta(1), epsilon(1). CF(0) has three main subunits: a, b and c.

Its subcellular location is the cellular thylakoid membrane. Produces ATP from ADP in the presence of a proton gradient across the membrane. The gamma chain is believed to be important in regulating ATPase activity and the flow of protons through the CF(0) complex. The polypeptide is ATP synthase gamma chain (Crocosphaera subtropica (strain ATCC 51142 / BH68) (Cyanothece sp. (strain ATCC 51142))).